The following is a 440-amino-acid chain: L-gulonolactone oxidase (440 aa).

Positions 17-187 (YGCCPEMYFQ…LTVTLQCVPQ (171 aa)) constitute an FAD-binding PCMH-type domain. His54 is subject to Pros-8alpha-FAD histidine. The chain crosses the membrane as a helical span at residues 253 to 273 (FYLLEFLLWISTFLPGLVGWI).

This sequence belongs to the oxygen-dependent FAD-linked oxidoreductase family. FAD serves as cofactor.

It localises to the microsome membrane. It is found in the endoplasmic reticulum membrane. It catalyses the reaction L-gulono-1,4-lactone + O2 = L-ascorbate + H2O2 + H(+). It functions in the pathway cofactor biosynthesis; L-ascorbate biosynthesis via UDP-alpha-D-glucuronate pathway; L-ascorbate from UDP-alpha-D-glucuronate: step 4/4. In terms of biological role, oxidizes L-gulono-1,4-lactone to hydrogen peroxide and L-xylo-hexulonolactone which spontaneously isomerizes to L-ascorbate. This is L-gulonolactone oxidase (GULO) from Bos taurus (Bovine).